The sequence spans 517 residues: ATP synthase subunit alpha 1 (517 aa).

174–181 (GDRQTGKT) is an ATP binding site.

It belongs to the ATPase alpha/beta chains family. F-type ATPases have 2 components, CF(1) - the catalytic core - and CF(0) - the membrane proton channel. CF(1) has five subunits: alpha(3), beta(3), gamma(1), delta(1), epsilon(1). CF(0) has three main subunits: a(1), b(2) and c(9-12). The alpha and beta chains form an alternating ring which encloses part of the gamma chain. CF(1) is attached to CF(0) by a central stalk formed by the gamma and epsilon chains, while a peripheral stalk is formed by the delta and b chains.

The protein resides in the cell inner membrane. It carries out the reaction ATP + H2O + 4 H(+)(in) = ADP + phosphate + 5 H(+)(out). Functionally, produces ATP from ADP in the presence of a proton gradient across the membrane. The alpha chain is a regulatory subunit. The chain is ATP synthase subunit alpha 1 from Polaromonas naphthalenivorans (strain CJ2).